A 128-amino-acid chain; its full sequence is Disintegrin EO4A (128 aa).

The N-terminal stretch at 1–20 (MIPVLLVTICLAVFPFQGSS) is a signal peptide. Positions 21 to 47 (IILESGNINDYEIVYPKKVNVLPTGAM) are excised as a propeptide. Positions 26 to 112 (GNINDYEIVY…DCPRNPYKGK (87 aa)) constitute a Disintegrin domain. Cystine bridges form between Cys-53–Cys-76, Cys-67–Cys-73, Cys-72–Cys-97, and Cys-85–Cys-104. Residues 89–91 (RGD) carry the Cell attachment site motif. Residues 115 to 128 (PMKWPAAAKGSVLM) constitute a propeptide that is removed on maturation.

The protein belongs to the disintegrin family. Dimeric disintegrin subfamily. In terms of assembly, heterodimer with EO5B; disulfide-linked. As to expression, expressed by the venom gland.

It localises to the secreted. Functionally, poor inhibitor of platelet aggregation. The disintegrin inhibits the adhesion of cells expressing the RGD-dependent integrin alpha-5/beta-1 (ITGA5/ITGB1) to immobilized fibronectin. Inhibition on alpha-2b/beta-3 (ITGA2B/ITGB3) is low. This chain is Disintegrin EO4A, found in Echis ocellatus (Ocellated saw-scaled viper).